Consider the following 162-residue polypeptide: Peroxiredoxin-2C (162 aa).

Residues 4–162 form the Thioredoxin domain; sequence ITVGDVVPDG…SSAEDILKAL (159 aa). Cysteine 51 functions as the Cysteine sulfenic acid (-SOH) intermediate in the catalytic mechanism.

It belongs to the peroxiredoxin family. Prx5 subfamily. Monomer. Highly expressed in buds and flowers. Slightly expressed in green tissues. Also detected in pollen.

The protein localises to the cytoplasm. The catalysed reaction is [glutaredoxin]-dithiol + a hydroperoxide = [glutaredoxin]-disulfide + an alcohol + H2O. Its function is as follows. Thiol-specific peroxidase that catalyzes the reduction of hydrogen peroxide and organic hydroperoxides to water and alcohols, respectively. Plays a role in cell protection against oxidative stress by detoxifying peroxides and as sensor of hydrogen peroxide-mediated signaling events. In Arabidopsis thaliana (Mouse-ear cress), this protein is Peroxiredoxin-2C (PRXIIC).